The chain runs to 348 residues: Propane 2-monooxygenase, reductase component (348 aa).

The 2Fe-2S ferredoxin-type domain maps to 5-95; the sequence is HKINFDPVDI…DCTIELLNFD (91 aa). [2Fe-2S] cluster contacts are provided by C39, C44, C47, and C79. The 102-residue stretch at 105–206 folds into the FAD-binding FR-type domain; that stretch reads IQDVRTQVQA…TGPYGSFTLK (102 aa).

It belongs to the bacterial ring-hydroxylating dioxygenase ferredoxin reductase family. As to quaternary structure, the propane 2-monooxygenase multicomponent enzyme system is composed of an electron transfer component and a monooxygenase component interacting with the effector protein MimD. The electron transfer component is composed of a reductase (MimB), and the monooxygenase component is formed by a large subunit (MimA) and a small subunit (MimC). FAD serves as cofactor. It depends on [2Fe-2S] cluster as a cofactor.

Its function is as follows. Reductase component of the propane 2-monooxygenase multicomponent enzyme system which is involved in the degradation of propane via the O2-dependent hydroxylation of propane. Reductase catalyzes the transfer of electrons from NADH or NADPH to monooxygenase. The sequence is that of Propane 2-monooxygenase, reductase component from Mycolicibacterium smegmatis (strain ATCC 700084 / mc(2)155) (Mycobacterium smegmatis).